The sequence spans 264 residues: tRNA (guanine-N(1)-)-methyltransferase (264 aa).

S-adenosyl-L-methionine contacts are provided by residues Gly-125 and 145–150 (LGDFVL).

The protein belongs to the RNA methyltransferase TrmD family. Homodimer.

Its subcellular location is the cytoplasm. It carries out the reaction guanosine(37) in tRNA + S-adenosyl-L-methionine = N(1)-methylguanosine(37) in tRNA + S-adenosyl-L-homocysteine + H(+). Its function is as follows. Specifically methylates guanosine-37 in various tRNAs. The protein is tRNA (guanine-N(1)-)-methyltransferase of Burkholderia cenocepacia (strain HI2424).